Consider the following 296-residue polypeptide: Nucleotide-binding protein SMU_1306c (296 aa).

Residue 13–20 (GMSGAGKT) participates in ATP binding. 63-66 (DMRS) is a GTP binding site.

This sequence belongs to the RapZ-like family.

Its function is as follows. Displays ATPase and GTPase activities. In Streptococcus mutans serotype c (strain ATCC 700610 / UA159), this protein is Nucleotide-binding protein SMU_1306c.